The sequence spans 579 residues: ATP-dependent lipid A-core flippase (579 aa).

5 helical membrane-spanning segments follow: residues Phe24–Leu44, Trp63–Thr83, Val150–Ala170, Val251–Ala271, and Thr275–Leu295. The 283-residue stretch at Ala25–Arg307 folds into the ABC transmembrane type-1 domain. The region spanning Leu339–Leu575 is the ABC transporter domain. ATP is bound at residue Gly373 to Thr380.

It belongs to the ABC transporter superfamily. Lipid exporter (TC 3.A.1.106) family. In terms of assembly, homodimer.

It is found in the cell inner membrane. The enzyme catalyses ATP + H2O + lipid A-core oligosaccharideSide 1 = ADP + phosphate + lipid A-core oligosaccharideSide 2.. Involved in lipopolysaccharide (LPS) biosynthesis. Translocates lipid A-core from the inner to the outer leaflet of the inner membrane. Transmembrane domains (TMD) form a pore in the inner membrane and the ATP-binding domain (NBD) is responsible for energy generation. The protein is ATP-dependent lipid A-core flippase of Thiobacillus denitrificans (strain ATCC 25259 / T1).